The sequence spans 220 residues: Tumor protein D54 (220 aa).

Methionine 1 carries the N-acetylmethionine modification. Residues 1–14 show a composition bias toward polar residues; sequence MDSASQDINLNSPN. The tract at residues 1–26 is disordered; that stretch reads MDSASQDINLNSPNKGVLSDFMTDVP. Phosphoserine occurs at positions 3, 12, and 19. Positions 40–82 form a coiled coil; the sequence is GLTEVEEEELRAELAKVEEEIVTLRQVLAAKERHCGELKRRLG. Serine 96, serine 149, serine 168, and serine 175 each carry phosphoserine. Threonine 177 carries the phosphothreonine modification. Serine 180 is subject to Phosphoserine. The residue at position 187 (threonine 187) is a Phosphothreonine. The disordered stretch occupies residues 189 to 220; sequence KSKVVGGRENGSDTLPSSPGSGDQTLPDHAPF. Residues 200 to 212 show a composition bias toward polar residues; that stretch reads SDTLPSSPGSGDQ. Phosphoserine occurs at positions 206 and 209.

This sequence belongs to the TPD52 family. As to quaternary structure, forms a homodimer or heterodimer with other members of the family. Interacts with MAL2.

This is Tumor protein D54 (Tpd52l2) from Rattus norvegicus (Rat).